We begin with the raw amino-acid sequence, 43 residues long: Neurotrophic factor BDNF (43 aa).

This sequence belongs to the NGF-beta family.

Its subcellular location is the secreted. Promotes the survival of neuronal populations that are all located either in the central nervous system or directly connected to it. The polypeptide is Neurotrophic factor BDNF (bdnf) (Raja clavata (Thornback ray)).